The chain runs to 143 residues: Anti-sigma F factor (143 aa).

Belongs to the anti-sigma-factor family.

It catalyses the reaction L-seryl-[protein] + ATP = O-phospho-L-seryl-[protein] + ADP + H(+). The enzyme catalyses L-threonyl-[protein] + ATP = O-phospho-L-threonyl-[protein] + ADP + H(+). In terms of biological role, binds to sigma F and blocks its ability to form an RNA polymerase holoenzyme (E-sigma F). Phosphorylates SpoIIAA on a serine residue. This phosphorylation may enable SpoIIAA to act as an anti-anti-sigma factor that counteracts SpoIIAB and thus releases sigma F from inhibition. In Clostridium novyi (strain NT), this protein is Anti-sigma F factor.